We begin with the raw amino-acid sequence, 174 residues long: Probable NAD(P)H dehydrogenase subunit CRR3, chloroplastic (174 aa).

The N-terminal 54 residues, 1-54 (MAVLSTIYSITRASTPTMASLTNDSPSPLPSSSPSKLPSPTSPSKKPLKLRQVS), are a transit peptide targeting the chloroplast. Residues 14-24 (STPTMASLTND) are compositionally biased toward polar residues. Residues 14–71 (STPTMASLTNDSPSPLPSSSPSKLPSPTSPSKKPLKLRQVSKQMGSQNQQRRGNKPSI) are disordered. Residues 30–45 (PSSSPSKLPSPTSPSK) show a composition bias toward low complexity. The span at 53-64 (VSKQMGSQNQQR) shows a compositional bias: polar residues. The chain crosses the membrane as a helical span at residues 140–160 (FTIQWILPIWIMSLLVACGVI).

The protein localises to the plastid. The protein resides in the chloroplast thylakoid membrane. Functionally, probable subunit of the chloroplast NAD(P)H dehydrogenase (NDH) complex of the photosynthetic electron transport chain. Required for both formation and activity of NDH. May function in assembly or stabilization of the NDH complex. The sequence is that of Probable NAD(P)H dehydrogenase subunit CRR3, chloroplastic from Arabidopsis thaliana (Mouse-ear cress).